We begin with the raw amino-acid sequence, 570 residues long: Hydroxylamine reductase (570 aa).

Residues C5, C8, C17, and C23 each contribute to the [4Fe-4S] cluster site. Hybrid [4Fe-2O-2S] cluster contacts are provided by H266, E290, C334, C425, C453, C478, E513, and K515. C425 is modified (cysteine persulfide).

This sequence belongs to the HCP family. [4Fe-4S] cluster is required as a cofactor. Requires hybrid [4Fe-2O-2S] cluster as cofactor.

It is found in the cytoplasm. It carries out the reaction A + NH4(+) + H2O = hydroxylamine + AH2 + H(+). Its function is as follows. Catalyzes the reduction of hydroxylamine to form NH(3) and H(2)O. In Clostridium botulinum (strain Kyoto / Type A2), this protein is Hydroxylamine reductase.